The following is a 348-amino-acid chain: Trace amine-associated receptor 9 (348 aa).

The Extracellular segment spans residues 1–33 (MTSDFSPEPPMELCYENVNGSCIKSSYAPWPRA). Asparagine 19 carries N-linked (GlcNAc...) asparagine glycosylation. 2 disulfides stabilise this stretch: cysteine 22/cysteine 186 and cysteine 105/cysteine 190. Residues 34-58 (ILYGVLGLGALLAVFGNLLVIIAIL) form a helical membrane-spanning segment. The Cytoplasmic portion of the chain corresponds to 59 to 68 (HFKQLHTPTN). Residues 69–90 (FLVASLACADFLVGVTVMPFST) traverse the membrane as a helical segment. The Extracellular portion of the chain corresponds to 91 to 105 (VRSVESCWYFGESYC). The helical transmembrane segment at 106-128 (KFHTCFDTSFCFASLFHLCCISI) threads the bilayer. Spermidine is bound by residues aspartate 112 and threonine 113. Topologically, residues 129–148 (DRYIAVTDPLTYPTKFTVSV) are cytoplasmic. The chain crosses the membrane as a helical span at residues 149-170 (SGLCIALSWFFSVTYSFSIFYT). The Extracellular segment spans residues 171–196 (GANEEGIEELVVALTCVGGCQAPLNQ). Residues 174–187 (EEGIEELVVALTCV) form an extracellular Loop 2 (ECL2) region. The helical transmembrane segment at 197-218 (NWVLLCFLLFFLPTVVMVFLYG) threads the bilayer. At 219–256 (RIFLVAKYQARKIEGTANQAQASSESYKERVAKRERKA) the chain is on the cytoplasmic side. Residues 257 to 280 (AKTLGIAMAAFLVSWLPYIIDAVI) form a helical membrane-spanning segment. Over 281-293 (DAYMNFITPAYVY) the chain is Extracellular. The chain crosses the membrane as a helical span at residues 294–314 (EILVWCVYYNSAMNPLIYAFF). Residues 315-348 (YPWFRKAIKLIVSGKVFRADSSTTNLFSEEAGAG) are Cytoplasmic-facing.

Belongs to the G-protein coupled receptor 1 family. Specifically expressed in neurons of the olfactory epithelium.

It localises to the cell membrane. Functionally, olfactory receptor specific for trace amines, such as triethylamine, N,N-dimethylcyclohexylamine (DMCHA), beta-phenylethylamine (beta-PEA), cadaverine (CAD) and polyamines such as spermine and spermidine. Trace amine compounds are enriched in animal body fluids and act on trace amine-associated receptors (TAARs) to elicit both intraspecific and interspecific innate behaviors. Trace amine-binding causes a conformation change that triggers signaling via G(s)-class of G alpha proteins (GNAL or GNAS). In mature olfactory sensory neurons, Taar9 is coupled with GNAL/G(olf)G alpha protein and mediates activation of adenylate cyclase activity to activate cAMP signaling and eventually transmit odorant signals to achieve membrane depolarization. In immature olfactory sensory neurons, Taar9 is coupled with GNAS/G(s) G alpha proteins. The chain is Trace amine-associated receptor 9 from Mus musculus (Mouse).